Reading from the N-terminus, the 77-residue chain is Acyl carrier protein (77 aa).

The region spanning 2–77 (SEKLQKIQAL…DAVAYIEERS (76 aa)) is the Carrier domain. S37 bears the O-(pantetheine 4'-phosphoryl)serine mark.

This sequence belongs to the acyl carrier protein (ACP) family. Post-translationally, 4'-phosphopantetheine is transferred from CoA to a specific serine of apo-ACP by AcpS. This modification is essential for activity because fatty acids are bound in thioester linkage to the sulfhydryl of the prosthetic group.

It is found in the cytoplasm. It functions in the pathway lipid metabolism; fatty acid biosynthesis. Its function is as follows. Carrier of the growing fatty acid chain in fatty acid biosynthesis. The sequence is that of Acyl carrier protein from Desulforudis audaxviator (strain MP104C).